The primary structure comprises 1145 residues: Error-prone DNA polymerase (1145 aa).

Belongs to the DNA polymerase type-C family. DnaE2 subfamily.

The protein localises to the cytoplasm. The enzyme catalyses DNA(n) + a 2'-deoxyribonucleoside 5'-triphosphate = DNA(n+1) + diphosphate. In terms of biological role, DNA polymerase involved in damage-induced mutagenesis and translesion synthesis (TLS). It is not the major replicative DNA polymerase. In Rhodopirellula baltica (strain DSM 10527 / NCIMB 13988 / SH1), this protein is Error-prone DNA polymerase.